A 628-amino-acid polypeptide reads, in one-letter code: tRNA (guanine(37)-N(1))-methyltransferase (628 aa).

S-adenosyl-L-methionine-binding positions include His265, 303–304 (DL), 342–343 (DG), and Asn445.

It belongs to the class I-like SAM-binding methyltransferase superfamily. TRM5/TYW2 family. Monomer.

The protein resides in the mitochondrion matrix. The protein localises to the nucleus. It is found in the cytoplasm. It carries out the reaction guanosine(37) in tRNA + S-adenosyl-L-methionine = N(1)-methylguanosine(37) in tRNA + S-adenosyl-L-homocysteine + H(+). In terms of biological role, specifically methylates the N1 position of guanosine-37 in various cytoplasmic and mitochondrial tRNAs. Methylation is not dependent on the nature of the nucleoside 5' of the target nucleoside. This is the first step in the biosynthesis of wybutosine (yW), a modified base adjacent to the anticodon of tRNAs and required for accurate decoding. In Mycosarcoma maydis (Corn smut fungus), this protein is tRNA (guanine(37)-N(1))-methyltransferase.